The following is a 78-amino-acid chain: MSRVCQVTKKRPVTGNRRSHAMNATKRRFLPNLHRHRFWIESEKRFITLRLSAKGIRIIDKKGIEAVLEEIKARGEKY.

Belongs to the bacterial ribosomal protein bL28 family.

The polypeptide is Large ribosomal subunit protein bL28 (Hamiltonella defensa subsp. Acyrthosiphon pisum (strain 5AT)).